Consider the following 160-residue polypeptide: Transcriptional repressor NrdR (160 aa).

Residues 3 to 34 (CPRCHHNNSRVIDSRQADDGRAIRRRRECENC) fold into a zinc finger. Residues 49–139 (LLVIKKNGDR…VYRQFKDMSV (91 aa)) enclose the ATP-cone domain.

Belongs to the NrdR family. It depends on Zn(2+) as a cofactor.

In terms of biological role, negatively regulates transcription of bacterial ribonucleotide reductase nrd genes and operons by binding to NrdR-boxes. In Enterococcus faecalis (strain ATCC 700802 / V583), this protein is Transcriptional repressor NrdR.